We begin with the raw amino-acid sequence, 27 residues long: Metalloproteinase inhibitor 1 (27 aa).

Acidic residues predominate over residues 1 to 12 (IEPERQEEEEEE). Residues 1–27 (IEPERQEEEEEETRQRVRRGQVRQQQQ) form a disordered region.

In terms of biological role, metalloproteinase inhibitor, active on a globulinase from L.albus seeds, thermolysin and gelatinase B. The polypeptide is Metalloproteinase inhibitor 1 (Lupinus albus (White lupine)).